A 288-amino-acid chain; its full sequence is Glycine--tRNA ligase alpha subunit (288 aa).

Belongs to the class-II aminoacyl-tRNA synthetase family. As to quaternary structure, tetramer of two alpha and two beta subunits.

The protein resides in the cytoplasm. It carries out the reaction tRNA(Gly) + glycine + ATP = glycyl-tRNA(Gly) + AMP + diphosphate. This is Glycine--tRNA ligase alpha subunit from Rickettsia rickettsii (strain Iowa).